The following is a 68-amino-acid chain: ATP-dependent 6-phosphofructokinase (68 aa).

17-20 (GDGT) contributes to the ATP binding site. Position 18 (Asp18) interacts with Mg(2+). Asp48 functions as the Proton acceptor in the catalytic mechanism.

Belongs to the phosphofructokinase type A (PFKA) family. PPi-dependent PFK group II subfamily. Atypical ATP-dependent clade 'X' sub-subfamily. As to quaternary structure, homotetramer. Mg(2+) serves as cofactor.

It is found in the cytoplasm. The enzyme catalyses beta-D-fructose 6-phosphate + ATP = beta-D-fructose 1,6-bisphosphate + ADP + H(+). It participates in carbohydrate degradation; glycolysis; D-glyceraldehyde 3-phosphate and glycerone phosphate from D-glucose: step 3/4. Its activity is regulated as follows. Allosterically activated by AMP. In terms of biological role, catalyzes the phosphorylation of D-fructose 6-phosphate to fructose 1,6-bisphosphate by ATP, the first committing step of glycolysis. In Triticum aestivum (Wheat), this protein is ATP-dependent 6-phosphofructokinase (PFK).